We begin with the raw amino-acid sequence, 422 residues long: Hispidin-3-hydroxylase (422 aa).

The chain crosses the membrane as a helical span at residues 6 to 26 (NSLSVLIVGAGLGGLAAAIAL). A50, R108, and D318 together coordinate FAD.

Belongs to the paxM FAD-dependent monooxygenase family. Monomer. Requires FAD as cofactor.

It localises to the membrane. It catalyses the reaction hispidin + NADH + O2 + H(+) = 3-hydroxyhispidin + NAD(+) + H2O. The enzyme catalyses hispidin + NADPH + O2 + H(+) = 3-hydroxyhispidin + NADP(+) + H2O. The protein operates within secondary metabolite biosynthesis. Functionally, hispidin-3-hydroxylase; part of the gene cluster that mediates the fungal bioluminescence cycle. Hydroxylates hispidin in order to produce the fungal luciferin 3-hydroxyhispidin. The fungal bioluminescence cycle begins with the hispidin synthetase that catalyzes the formation of hispidin which is further hydroxylated by the hispidin-3-hydroxylase, yielding the fungal luciferin 3-hydroxyhispidin. The luciferase then produces an endoperoxide as a high-energy intermediate with decomposition that yields oxyluciferin (also known as caffeoylpyruvate) and light emission. Oxyluciferin can be recycled to caffeic acid by caffeoylpyruvate hydrolase. The protein is Hispidin-3-hydroxylase of Neonothopanus nambi (Agaricus nambi).